Here is a 466-residue protein sequence, read N- to C-terminus: Cysteine--tRNA ligase (466 aa).

Zn(2+) is bound at residue Cys-29. A 'HIGH' region motif is present at residues 31–41 (PTVYNYIHIGN). Positions 209, 234, and 238 each coordinate Zn(2+). The 'KMSKS' region motif lies at 266–270 (KMSKS). Lys-269 contributes to the ATP binding site. Position 270 is a phosphoserine (Ser-270).

This sequence belongs to the class-I aminoacyl-tRNA synthetase family. In terms of assembly, monomer. Requires Zn(2+) as cofactor.

It is found in the cytoplasm. The enzyme catalyses tRNA(Cys) + L-cysteine + ATP = L-cysteinyl-tRNA(Cys) + AMP + diphosphate. The polypeptide is Cysteine--tRNA ligase (Bacillus pumilus (strain SAFR-032)).